Here is a 317-residue protein sequence, read N- to C-terminus: MTSLSNSLSADAGRASLASAAGGEVSDFFALLKPRVMVLVIFTALVGMVVSDATVNPVIAAISLLMIAVGAGASGCLNMWWDADIDALMTRTAKRPIPDGRIRPDEALAFGIVLSVGSVLILGLASNWLAAGLLAFTIVFYAVIYSMWLKRATAQNIVIGGAAGALPPVVGQAAVTGHVGIESLVLFAIIFIWTPPHFWALALVKSGEYARAGIPMMPNVAGPDSTRRQIVWYSLLLAPLALVPVWLGFGGWLYAVVGVLGGLGMLAGAVQVYRLREGEPERKAAMGLFAFSILYLFLLFSALLAEQGLGLFRAVAA.

The next 9 helical transmembrane spans lie at 36–56 (VMVLVIFTALVGMVVSDATVN), 57–77 (PVIAAISLLMIAVGAGASGCL), 108–128 (LAFGIVLSVGSVLILGLASNW), 129–149 (LAAGLLAFTIVFYAVIYSMWL), 157–177 (IVIGGAAGALPPVVGQAAVTG), 184–204 (LVLFAIIFIWTPPHFWALALV), 230–247 (IVWYSLLLAPLALVPVWL), 251–273 (GWLYAVVGVLGGLGMLAGAVQVY), and 284–304 (AAMGLFAFSILYLFLLFSALL).

It belongs to the UbiA prenyltransferase family. Protoheme IX farnesyltransferase subfamily.

It is found in the cell inner membrane. It carries out the reaction heme b + (2E,6E)-farnesyl diphosphate + H2O = Fe(II)-heme o + diphosphate. It participates in porphyrin-containing compound metabolism; heme O biosynthesis; heme O from protoheme: step 1/1. Converts heme B (protoheme IX) to heme O by substitution of the vinyl group on carbon 2 of heme B porphyrin ring with a hydroxyethyl farnesyl side group. This chain is Protoheme IX farnesyltransferase, found in Methylorubrum populi (strain ATCC BAA-705 / NCIMB 13946 / BJ001) (Methylobacterium populi).